Consider the following 154-residue polypeptide: Myoglobin (154 aa).

Residues 2–148 (GLSDGEWQLV…FRNDMAAKYK (147 aa)) form the Globin domain. S4 carries the phosphoserine modification. H65 is a binding site for nitrite. H65 serves as a coordination point for O2. The residue at position 68 (T68) is a Phosphothreonine. H94 serves as a coordination point for heme b.

The protein belongs to the globin family. Monomeric.

The protein resides in the cytoplasm. Its subcellular location is the sarcoplasm. It carries out the reaction Fe(III)-heme b-[protein] + nitric oxide + H2O = Fe(II)-heme b-[protein] + nitrite + 2 H(+). The catalysed reaction is H2O2 + AH2 = A + 2 H2O. Functionally, monomeric heme protein which primary function is to store oxygen and facilitate its diffusion within muscle tissues. Reversibly binds oxygen through a pentacoordinated heme iron and enables its timely and efficient release as needed during periods of heightened demand. Depending on the oxidative conditions of tissues and cells, and in addition to its ability to bind oxygen, it also has a nitrite reductase activity whereby it regulates the production of bioactive nitric oxide. Under stress conditions, like hypoxia and anoxia, it also protects cells against reactive oxygen species thanks to its pseudoperoxidase activity. This Erythrocebus patas (Red guenon) protein is Myoglobin (MB).